The primary structure comprises 84 residues: Cell division topological specificity factor (84 aa).

This sequence belongs to the MinE family.

Its function is as follows. Prevents the cell division inhibition by proteins MinC and MinD at internal division sites while permitting inhibition at polar sites. This ensures cell division at the proper site by restricting the formation of a division septum at the midpoint of the long axis of the cell. In Chromohalobacter salexigens (strain ATCC BAA-138 / DSM 3043 / CIP 106854 / NCIMB 13768 / 1H11), this protein is Cell division topological specificity factor.